The primary structure comprises 299 residues: MTLSFHYNRNDTKIMDIIVISGPTASGKTKKAVEFCKEKNGEIISCDSRQIYKYLDTGTNKEGVFLQNGLRRIDGVLQHLTDILNPDQNYSAAKFVKDADLKISEILKKGKVPVVTGGTGLYIKALLYGLDEMPKADKTLRKELKTKSQDELYSVLLKSDPEAAEKNKKNPQRLLRALEVNILSGRTMQEHFKSKSPRYNFGHYSISVDNKILYKKTNERCKYMIESGMIEETQKVLNMGFDKNCSALSGIGYRHIIQYLEKKISKEDLILEFSKDTRHYAKRQNTWFKAQPDVDFMFY.

22 to 29 (GPTASGKT) is an ATP binding site. Substrate is bound at residue 24–29 (TASGKT). Interaction with substrate tRNA regions lie at residues 47–50 (DSRQ) and 172–176 (QRLLR).

Belongs to the IPP transferase family. Monomer. The cofactor is Mg(2+).

It catalyses the reaction adenosine(37) in tRNA + dimethylallyl diphosphate = N(6)-dimethylallyladenosine(37) in tRNA + diphosphate. Its function is as follows. Catalyzes the transfer of a dimethylallyl group onto the adenine at position 37 in tRNAs that read codons beginning with uridine, leading to the formation of N6-(dimethylallyl)adenosine (i(6)A). The polypeptide is tRNA dimethylallyltransferase (Endomicrobium trichonymphae).